We begin with the raw amino-acid sequence, 267 residues long: Glutamate 5-kinase (267 aa).

Lys-14 is an ATP binding site. Ser-54, Asp-141, and Asn-157 together coordinate substrate. Residues 177 to 178 and 219 to 225 each bind ATP; these read SD and TGGMMSK.

The protein belongs to the glutamate 5-kinase family.

The protein localises to the cytoplasm. It carries out the reaction L-glutamate + ATP = L-glutamyl 5-phosphate + ADP. The protein operates within amino-acid biosynthesis; L-proline biosynthesis; L-glutamate 5-semialdehyde from L-glutamate: step 1/2. Functionally, catalyzes the transfer of a phosphate group to glutamate to form L-glutamate 5-phosphate. This chain is Glutamate 5-kinase, found in Streptococcus thermophilus (strain CNRZ 1066).